The following is a 374-amino-acid chain: MKFRKGELFCGPGGLALGAKEAKYMHPETGEVFEFEHAWANDIDEWACETFRTNICPDRPDSVVCGDVRELDIKSLGEKFGEIDAFTFGFPCNDYSIVGEHKGMEGNYGPLYSYGVKILNEYNPLVFIAENVGGLQSANEGKAFLGILNDLASAGKYGYKLVPHLYKFEEYGVPQRRHRIIIVGIRKDQDVAFRVPEPTHKEKYRTASEALADIPEDALNHEFTRHKKKVVEMLNHIAPGGNAWSESIPEELRLNVKKVRMSQIYRRLHPDQPSYTVTGSGGGGTHGYHWEEPRALTNRERARLQTFPDDYEFIGKKEMVRKQIGMAVPPDGAKIILEAVLKTFARIEYPSINSKWDFESVSAEQVIEEVQEIM.

The SAM-dependent MTase C5-type domain occupies 3–347 (FRKGELFCGP…EAVLKTFARI (345 aa)). Cys-92 is an active-site residue.

The protein belongs to the class I-like SAM-binding methyltransferase superfamily. C5-methyltransferase family.

It catalyses the reaction a 2'-deoxycytidine in DNA + S-adenosyl-L-methionine = a 5-methyl-2'-deoxycytidine in DNA + S-adenosyl-L-homocysteine + H(+). Its function is as follows. A methylase, recognizes the double-stranded sequence 5'-GCAGC-3', methylates C-2 on both strands, and protects the DNA from cleavage by the BbvI endonuclease. In Brevibacillus brevis (Bacillus brevis), this protein is Type II methyltransferase M.BbvI (bbvIM).